The sequence spans 542 residues: Probable serine/threonine-protein kinase ndrB (542 aa).

Positions 1–52 are disordered; sequence MNVERKLESLSLQQQQQEEQQDESEQPNQGVEDEEEEEYDEEEYEEEEEDIN. Positions 9–18 are enriched in low complexity; that stretch reads SLSLQQQQQE. The span at 19–51 shows a compositional bias: acidic residues; sequence EQQDESEQPNQGVEDEEEEEYDEEEYEEEEEDI. In terms of domain architecture, Protein kinase spans 130–437; it reads FESIRIIGRG…VEEIQSHPFF (308 aa). Residues 136-144 and Lys-159 each bind ATP; that span reads IGRGAFGEV. Asp-258 functions as the Proton acceptor in the catalytic mechanism. Residues 438 to 510 enclose the AGC-kinase C-terminal domain; it reads KGVDWRRLRE…RNFDAMRDAF (73 aa). Positions 452-486 are disordered; sequence IIPQLSSPTDTSNFDHYEEEQQPEPMQPVQSKSRR. A compositionally biased stretch (polar residues) spans 455 to 465; it reads QLSSPTDTSNF.

Belongs to the protein kinase superfamily. AGC Ser/Thr protein kinase family.

It localises to the cytoplasm. The catalysed reaction is L-seryl-[protein] + ATP = O-phospho-L-seryl-[protein] + ADP + H(+). The enzyme catalyses L-threonyl-[protein] + ATP = O-phospho-L-threonyl-[protein] + ADP + H(+). This is Probable serine/threonine-protein kinase ndrB (ndrB) from Dictyostelium discoideum (Social amoeba).